The chain runs to 213 residues: Thiamine-phosphate synthase (213 aa).

4-amino-2-methyl-5-(diphosphooxymethyl)pyrimidine-binding positions include 39–43 and Asp-71; that span reads QYRDK. Positions 72 and 91 each coordinate Mg(2+). Ser-108 serves as a coordination point for 4-amino-2-methyl-5-(diphosphooxymethyl)pyrimidine. Residue 135–137 coordinates 2-[(2R,5Z)-2-carboxy-4-methylthiazol-5(2H)-ylidene]ethyl phosphate; it reads TDT. Lys-138 provides a ligand contact to 4-amino-2-methyl-5-(diphosphooxymethyl)pyrimidine. Residues Gly-165 and 185–186 each bind 2-[(2R,5Z)-2-carboxy-4-methylthiazol-5(2H)-ylidene]ethyl phosphate; that span reads VS.

Belongs to the thiamine-phosphate synthase family. Mg(2+) is required as a cofactor.

The catalysed reaction is 2-[(2R,5Z)-2-carboxy-4-methylthiazol-5(2H)-ylidene]ethyl phosphate + 4-amino-2-methyl-5-(diphosphooxymethyl)pyrimidine + 2 H(+) = thiamine phosphate + CO2 + diphosphate. It catalyses the reaction 2-(2-carboxy-4-methylthiazol-5-yl)ethyl phosphate + 4-amino-2-methyl-5-(diphosphooxymethyl)pyrimidine + 2 H(+) = thiamine phosphate + CO2 + diphosphate. It carries out the reaction 4-methyl-5-(2-phosphooxyethyl)-thiazole + 4-amino-2-methyl-5-(diphosphooxymethyl)pyrimidine + H(+) = thiamine phosphate + diphosphate. Its pathway is cofactor biosynthesis; thiamine diphosphate biosynthesis; thiamine phosphate from 4-amino-2-methyl-5-diphosphomethylpyrimidine and 4-methyl-5-(2-phosphoethyl)-thiazole: step 1/1. Condenses 4-methyl-5-(beta-hydroxyethyl)thiazole monophosphate (THZ-P) and 2-methyl-4-amino-5-hydroxymethyl pyrimidine pyrophosphate (HMP-PP) to form thiamine monophosphate (TMP). The chain is Thiamine-phosphate synthase from Thermoplasma acidophilum (strain ATCC 25905 / DSM 1728 / JCM 9062 / NBRC 15155 / AMRC-C165).